Here is a 112-residue protein sequence, read N- to C-terminus: uncharacterized protein (112 aa).

2 consecutive transmembrane segments (helical) span residues 44–63 and 68–90; these read VITG…LHSL and LAAL…KLVH.

It is found in the cell membrane. This is an uncharacterized protein from Archaeoglobus fulgidus (strain ATCC 49558 / DSM 4304 / JCM 9628 / NBRC 100126 / VC-16).